A 331-amino-acid polypeptide reads, in one-letter code: Thiamine thiazole synthase (331 aa).

Residues S82, 103-104, G111, and V176 each bind substrate; that span reads EA. C210 carries the 2,3-didehydroalanine (Cys) modification. Residues D212, H242, M296, and 306-308 each bind substrate; that span reads RMG.

It belongs to the THI4 family. As to quaternary structure, homooctamer. Requires Fe cation as cofactor. Post-translationally, during the catalytic reaction, a sulfide is transferred from Cys-210 to a reaction intermediate, generating a dehydroalanine residue.

It is found in the cytoplasm. It localises to the nucleus. It catalyses the reaction [ADP-thiazole synthase]-L-cysteine + glycine + NAD(+) = [ADP-thiazole synthase]-dehydroalanine + ADP-5-ethyl-4-methylthiazole-2-carboxylate + nicotinamide + 3 H2O + 2 H(+). Its function is as follows. Involved in biosynthesis of the thiamine precursor thiazole. Catalyzes the conversion of NAD and glycine to adenosine diphosphate 5-(2-hydroxyethyl)-4-methylthiazole-2-carboxylic acid (ADT), an adenylated thiazole intermediate. The reaction includes an iron-dependent sulfide transfer from a conserved cysteine residue of the protein to a thiazole intermediate. The enzyme can only undergo a single turnover, which suggests it is a suicide enzyme. May have additional roles in adaptation to various stress conditions and in DNA damage tolerance. This Eremothecium gossypii (strain ATCC 10895 / CBS 109.51 / FGSC 9923 / NRRL Y-1056) (Yeast) protein is Thiamine thiazole synthase.